Here is a 300-residue protein sequence, read N- to C-terminus: Porphobilinogen deaminase (300 aa).

C243 carries the S-(dipyrrolylmethanemethyl)cysteine modification.

Belongs to the HMBS family. In terms of assembly, monomer. Requires dipyrromethane as cofactor.

It carries out the reaction 4 porphobilinogen + H2O = hydroxymethylbilane + 4 NH4(+). The protein operates within porphyrin-containing compound metabolism; protoporphyrin-IX biosynthesis; coproporphyrinogen-III from 5-aminolevulinate: step 2/4. Its function is as follows. Tetrapolymerization of the monopyrrole PBG into the hydroxymethylbilane pre-uroporphyrinogen in several discrete steps. This is Porphobilinogen deaminase from Clostridium novyi (strain NT).